A 296-amino-acid chain; its full sequence is Large ribosomal subunit protein uL15m (296 aa).

The N-terminal 20 residues, 1 to 20 (MAASGGSGGKATELLRCLPR), are a transit peptide targeting the mitochondrion. Positions 25 to 66 (NLRPNPGARHREKRRGRGIHGGRKSGRGHKGETQRGNQPRLG) are disordered. Residues 32–52 (ARHREKRRGRGIHGGRKSGRG) show a composition bias toward basic residues.

Belongs to the universal ribosomal protein uL15 family. Component of the mitochondrial ribosome large subunit (39S) which comprises a 16S rRNA and about 50 distinct proteins.

The protein resides in the mitochondrion. The protein is Large ribosomal subunit protein uL15m (mrpl15) of Xenopus laevis (African clawed frog).